The sequence spans 1117 residues: Centrosomal protein of 126 kDa (1117 aa).

Positions 1–42 (MLAGRPGTRSAVGELGTESSDNLDRAPLGPRESGGHHRPGSY) are disordered. Positions 49-121 (LEKNLEEERQ…EEVTEKFQRA (73 aa)) form a coiled coil. 2 disordered regions span residues 643–664 (AENSHSLKNKTGTTQQHSQQFH) and 730–759 (KKEESKIPVHDDSKTKQGKPQRGRAKIIRK). Basic and acidic residues predominate over residues 730–744 (KKEESKIPVHDDSKT). Positions 745-758 (KQGKPQRGRAKIIR) are enriched in basic residues.

As to quaternary structure, interacts with DCTN1. In terms of tissue distribution, expressed in brain, lung, skeletal muscle, kidney, pancreas, testis and ovary.

Its subcellular location is the midbody. It localises to the cytoplasm. It is found in the cytoskeleton. The protein resides in the microtubule organizing center. The protein localises to the centrosome. Its subcellular location is the cilium basal body. Participates in cytokinesis. Necessary for microtubules and mitotic spindle organization. Involved in primary cilium formation. The sequence is that of Centrosomal protein of 126 kDa from Homo sapiens (Human).